The chain runs to 3960 residues: MSGILDRCTCTPNARVFMAEGQVYCTRCLSARSLLPLNLQVSELGVLGLFYRPEEPLRWTLPRAFPTVECSPAGACWLSAIFPIARMTSGNLNFQQRMVRVAAELYRAGQLTPAVLKALQVYERGCRWYPIVGPVPGVAVFANSLHVSDKPFPGATHVLTNLPLPQRPKPEDFCPFECAMATVYDIGHDAVMYVAERKVSWAPRGGDEVKFEAVPGELKLIANRLRTSFPPHHTVDMSKFAFTAPGCGVSMRVERQHGCLPADTVPEGNCWWSLFDLLPLEVQNKEIRHANQFGYQTKHGVSGKYLQRRLQVNGLRAVTDLNGPIVVQYFSVKESWIRHLKLAGEPSYSGFEDLLRIRVEPNTSPLADKEEKIFRFGSHKWYGAGKRARKARSCATATVAGRALSVRETRQAKEHEVAGANKAEHLKHYSPPAEGNCGWHCISAIANRMVNSKFETTLPERVRPPDDWATDEDLVNAIQILRLPAALDRNGACTSAKYVLKLEGEHWTVTVTPGMSPSLLPLECVQGCCGHKGGLGSPDAVEVSGFDPACLDRLAEVMHLPSSAIPAALAEMSGDSDRSASPVTTVWTVSQFFARHSGGNHPDQVRLGKIISLCQVIEDCCCSQNKTNRVTPEEVAAKIDLYLRGATNLEECLARLEKARPPRVIDTSFDWDVVLPGVEAATQTIKLPQVNQCRALVPVVTQKSLDNNSVPLTAFSLANYYYRAQGDEVRHRERLTAVLSKLEKVVREEYGLMPTEPGPRPTLPRGLDELKDQMEEDLLKLANAQTTSDMMAWAVEQVDLKTWVKNYPRWTPPPPPPKVQPRKTKPVKSLPERKPVPAPRRKVGSDCGSPVSLGGDVPNSWEDLAVSSPFDLPTPPEPATPSSELVIVSSPQCIFRPATPLSEPAPIPAPRGTVSRPVTPLSEPIPVPAPRRKFQQVKRLSSAAAIPPYQDEPLDLSASSQTEYEASPPAPPQSGGVLGVEGHEAEETLSEISDMSGNIKPASVSSSSSLSSVRITRPKYSAQAIIDSGGPCSGHLQEVKETCLSVMREACDATKLDDPATQEWLSRMWDRVDMLTWRNTSVYQAICTLDGRLKFLPKMILETPPPYPCEFVMMPHTPAPSVGAESDLTIGSVATEDVPRILEKIENVGEMANQGPLAFSEDKPVDDQLVNDPRISSRRPDESTSAPSAGTGGAGSFTDLPPSDGADADGGGPFRTVKRKAERLFDQLSRQVFDLVSHLPVFFSRLFYPGGGYSPGDWGFAAFTLLCLFLCYSYPAFGIAPLLGVFSGSSRRVRMGVFGCWLAFAVGLFKPVSDPVGAACEFDSPECRNILHSFELLKPWDPVRSLVVGPVGLGLAILGRLLGGARCIWHFLLRLGIVADCILAGAYVLSQGRCKKCWGSCIRTAPNEVAFNVFPFTRATRSSLIDLCDRFCAPKGMDPIFLATGWRGCWAGRSPIEQPSEKPIAFAQLDEKKITARTVVAQPYDPNQAVKCLRVLQSGGAMVAKAVPKVVKVSAVPFRAPFFPTGVKVDPDCRVVVDPDTFTAALRSGYSTTNLVLGVGDFAQLNGLKIRQISKPSGGGPHLMAALHVACSMALHMLAGIYVTAVGSCGTGTNDPWCANPFAVPGYGPGSLCTSRLCISQHGLTLPLTALVAGFGIQEIALVVLIFVSIGGMAHRLSCKADMLCVLLAIASYVWVPLTWLLCVFPCWLRCFSLHPLTILWLVFFLISVNMPSGILAMVLLVSLWLLGRYTNVAGLVTPYDIHHYTSGPRGVAALATAPDGTYLAAVRRAALTGRTMLFTPSQLGSLLEGAFRTRKPSLNTVNVIGSSMGSGGVFTIDGKVKCVTAAHVLTGNSARVSGVGFNQMLDFDVKGDFAIADCPNWQGAAPKTQFCTDGWTGRAYWLTSSGVEPGVIGKGFAFCFTACGDSGSPVITEAGELVGVHTGSNKQGGGIVTRPSGQFCNVAPIKLSELSEFFAGPKVPLGDVKVGSHIIKDISEVPSDLCALLAAKPELEGGLSTVQLLCVFFLLWRMMGHAWTPLVAVSFFILNEVLPAVLVRSVFSFGMFVLSWLTPWSAQVLMIRLLTAALNRNRWSLAFFSLGAVTGFVADLAATQGHPLQAVMNLSTYAFLPRMMVVTSPVPVITCGVVHLLAIILYLFKYRGPHHILVGDGVFSAAFFLRYFAEGKLREGVSQSCGMNHESLTGALAMRLNDEDLDFLMKWTDFKCFVSASNMRNAAGQFIEAAYAKALRVELAQLVQVDKVRGTLAKLEAFADTVAPQLSPGDIVVALGHTPVGSIFDLKVGSTKHTLQAIETRVLAGSKMTVARVVDPTPTPPPAPVPIPLPPKVLENGPNAWGDEDRLNKKKRRRMEALGIYVMGGKKYQKFWDKNSGDVFYEEVHNNTDEWECLRVGDPADFDPEKGTLCGHVTIENKAYHVYTSPSGKKFLVPVNPENGRVQWEAAKLSVEQALGMMNVDGELTAKELEKLKRIIDKLQGLTKEQCLNCLAASDLTRCGRGGLVVTETAVKIVKFHNRTFTLGPVNLKVASEVELKDAVEHNQHPVARPIDGGVVLLRSAVPSLIDVLISGADASPKLLAHHGPGNTGIDGTLWDFESEATKEEVALSAQIIQACDIRRGDAPEIGLPYKLYPVRGNPERVKGVLQNTRFGDIPYKTPSDTGSPVHAAACLTPNATPVTDGRSVLATTMPPGFELYVPTIPASVLDYLDSRPDCPKQLTEHGCEDAALKDLSKYDLSTQGFVLPGVLRLVRKYLFAHVGKCPPVHRPSTYPAKNSMAGINGNRFPTKDIQSVPEIDVLCAQAVRENWQTVTPCTLKKQYCGKKKTRTILGTNNFIALAHRAVLSGVTQGFMKKAFNSPIALGKNKFKELQTPVLGRCLEADLASCDRSTPAIVRWFAANLLYELACAEEHLPSYVLNCCHDLLVTQSGAVTKRGGLSSGDPITSVSNTIYSLVIYAQHMVLSYFKSGHPHGLLFLQDQLKFEDMLKVQPLIVYSDDLVLYAESPTMPNYHWWVEHLNLMLGFQTDPKKTAITDSPSFLGCRIINGRQLVPNRDRILAALAYHMKASNVSEYYASAAAILMDSCACLEYDPEWFEELVVGIAQCARKDGYSFPGTPFFMSMWEKLRSNYEGKKSRVCGYCGAPAPYATACGLDVCIYHTHFHQHCPVTIWCGHPAGSGSCSECKSPVGKGTSPLDEVLEQVPYKPPRTVIMHVEQGLTPLDPGRYQTRRGLVSVRRGIRGNEVGLPDGDYASTALLPTCKEINMVAVASNVLRSRFIIGPPGAGKTYWLLQQVQDGDVIYTPTHQTMLDMIRALGTCRFNVPAGTTLQFPVPSRTGPWVRILAGGWCPGKNSFLDEAAYCNHLDVLRLLSKTTLTCLGDFKQLHPVGFDSHCYVFDIMPQTQLKTIWRFGQNICDAIQPDYRDKLMSMVNTTRVTYVEKPVRYGQVLTPYHRDREDDAITIDSSQGATFDVVTLHLPTKDSLNRQRALVAITRARHAIFVYDPHRQLQGLFDLPAKGTPVNLAVHCDGQLIVLDRNNKECTVAQALGNGDKFRATDKRVVDSLRAICADLEGSSSPLPKVAHNLGFYFSPDLTQFAKLPVELAPHWPVVSTQNNEKWPDRLVASLRPIHKYSRACIGAGYMVGPSVFLGTPGVVSYYLTKFVKGGAQVLPETVFSTGRIEVDCREYLDDREREVAASLPHGFIGDVKGTTVGGCHHVTSRYLPRVLPKESVAVVGVSSPGKAAKALCTLTDVYLPDLEAYLHPETQSKCWKMMLDFKEVRLMVWKDKTAYFQLEGRYFTWYQLASYASYIRVPVNSTVYLDPCMGPALCNRRVVGSTHWGADLAVTPYDYGAKIILSSAYHGEMPPGYKILACAEFSLDDPVKYKHTWGFESDTAYLYEFTGNGEDWEDYNDAFRARQEGKIYKATATSLKFYFPPGPVIEPTLGLN.

The C4-type; atypical zinc-finger motif lies at 8–28 (CTCTPNARVFMAEGQVYCTRC). Residues 69–180 (ECSPAGACWL…EDFCPFECAM (112 aa)) form the Peptidase C31 domain. A PCP1-alpha region spans residues 69-182 (ECSPAGACWL…FCPFECAMAT (114 aa)). Active-site for Nsp1-alpha papain-like cysteine proteinase activity residues include C76 and H146. The important for host EIF2AK2 inhibition stretch occupies residues 199-200 (VS). Residues 263 to 382 (DTVPEGNCWW…IFRFGSHKWY (120 aa)) form a PCP1-beta region. A Peptidase C32 domain is found at 263-383 (DTVPEGNCWW…FRFGSHKWYG (121 aa)). Catalysis depends on for Nsp1-beta papain-like cysteine proteinase activity residues C270 and H339. Residues 426 to 513 (LKHYSPPAEG…GEHWTVTVTP (88 aa)) form an OTU-like region. The Peptidase C33 domain occupies 428 to 535 (HYSPPAEGNC…QGCCGHKGGL (108 aa)). Residues C437 and H506 each act as for Nsp2 cysteine proteinase activity in the active site. 3 disordered regions span residues 809–882 (RWTP…ATPS), 899–979 (TPLS…GVLG), and 1156–1213 (PLAF…GGGP). Residues 810-819 (WTPPPPPPKV) are compositionally biased toward pro residues. 8 consecutive transmembrane segments (helical) span residues 1266-1286 (LCLFLCYSYPAFGIAPLLGVF), 1296-1316 (GVFGCWLAFAVGLFKPVSDPV), 1345-1365 (SLVVGPVGLGLAILGRLLGGA), 1368-1388 (IWHFLLRLGIVADCILAGAYV), 1583-1603 (LMAALHVACSMALHMLAGIYV), 1650-1670 (ALVAGFGIQEIALVVLIFVSI), 1685-1705 (CVLLAIASYVWVPLTWLLCVF), and 1719-1739 (ILWLVFFLISVNMPSGILAMV). An HD1 region spans residues 1266 to 1388 (LCLFLCYSYP…ADCILAGAYV (123 aa)). Residues 1583 to 1745 (LMAALHVACS…LAMVLLVSLW (163 aa)) form an HD2 region. The 204-residue stretch at 1810–2013 (GAFRTRKPSL…ALLAAKPELE (204 aa)) folds into the Peptidase S32 domain. Active-site charge relay system; for 3C-like serine proteinase activity residues include H1848, D1873, and S1927. A run of 5 helical transmembrane segments spans residues 2012–2032 (LEGGLSTVQLLCVFFLLWRMM), 2060–2080 (FSFGMFVLSWLTPWSAQVLMI), 2092–2112 (WSLAFFSLGAVTGFVADLAAT), 2137–2157 (SPVPVITCGVVHLLAIILYLF), and 2164–2184 (HILVGDGVFSAAFFLRYFAEG). The tract at residues 2036–2157 (WTPLVAVSFF…HLLAIILYLF (122 aa)) is HD3. A disordered region spans residues 2329 to 2358 (PTPTPPPAPVPIPLPPKVLENGPNAWGDED). Pro residues predominate over residues 2330–2344 (TPTPPPAPVPIPLPP). Positions 2488-2650 (IIDKLQGLTK…LPYKLYPVRG (163 aa)) constitute a NiRAN domain. Residues 2889–3023 (GRCLEADLAS…YAESPTMPNY (135 aa)) enclose the RdRp catalytic domain. The AV ZBD domain occupies 3144–3207 (GKKSRVCGYC…SPVGKGTSPL (64 aa)). Positions 3150, 3153, 3163, 3168, 3171, 3173, 3175, 3177, 3184, 3186, 3193, and 3196 each coordinate Zn(2+). A (+)RNA virus helicase ATP-binding domain is found at 3264–3416 (ASTALLPTCK…VFDIMPQTQL (153 aa)). Position 3292–3299 (3292–3299 (GPPGAGKT)) interacts with ATP. In terms of domain architecture, (+)RNA virus helicase C-terminal spans 3417–3545 (KTIWRFGQNI…AVHCDGQLIV (129 aa)). Residues 3584–3680 (EGSSSPLPKV…LTKFVKGGAQ (97 aa)) enclose the AV-Nsp11N/CoV-Nsp15M domain. One can recognise a NendoU domain in the interval 3682–3804 (LPETVFSTGR…MVWKDKTAYF (123 aa)). Active-site residues include H3713, H3728, and K3757.

The protein belongs to the arteriviridae polyprotein family. Nsp1-alpha papain-like: Interacts with host RNF31. In terms of assembly, interacts with host EIF2AK2; this interaction occurs in host stress granules and leads to EIF2AK2 inhibition. Interacts with host G3BP1; this interaction probably plays a role in Nsp1-beta-mediated inhibition of host EIF2AK2. As to quaternary structure, interacts with host DDX18; this interaction redistributes host DDX18 to the cytoplasm. Interacts with host IFITM1. In terms of assembly, interacts with host DDX5. As to quaternary structure, interacts with host OTULIN. Interacts with host LGALS3. Specific enzymatic cleavages in vivo by its own proteases yield mature proteins. Nsp1 is autocleaved into two subunits, Nsp1-alpha and Nsp1-beta. There are two alternative pathways for processing. Either nsp4-5 is cleaved, which represents the major pathway or the nsp5-6 and nsp6-7 are processed, which represents the minor pathway. The major pathway occurs when nsp2 acts as a cofactor for nsp4.

Its subcellular location is the host nucleus. The protein localises to the host cytoplasm. It localises to the host membrane. It is found in the host endoplasmic reticulum. The protein resides in the host perinuclear region. It carries out the reaction RNA(n) + a ribonucleoside 5'-triphosphate = RNA(n+1) + diphosphate. It catalyses the reaction ATP + H2O = ADP + phosphate + H(+). The catalysed reaction is Thiol-dependent hydrolysis of ester, thioester, amide, peptide and isopeptide bonds formed by the C-terminal Gly of ubiquitin (a 76-residue protein attached to proteins as an intracellular targeting signal).. The enzyme catalyses uridylyl-uridylyl-ribonucleotide-RNA = a 3'-end uridylyl-2',3'-cyclophospho-uridine-RNA + a 5'-end dephospho-ribonucleoside-RNA. In terms of biological role, contains the activities necessary for the transcription of negative stranded RNA, leader RNA, subgenomic mRNAs and progeny virion RNA as well as proteinases responsible for the cleavage of the polyprotein into functional products. Functionally, inhibits host IFN-beta production. Plays a role in the degradation of the host transcriptional activator CREBBP protein. The degradation of host CREBBP which is a key component of the IFN enhanceosome is likely responsible for the inhibition of interferon mediated by Nsp1-alpha. Also participates in the inhibition of host NF-kappa-B activation by counteracting LUBAC-dependent induction of NF-kappa-B. Reduces host NEMO ubiquitination by blocking the interaction between the two LUBAC complex components RNF31 and SHARPIN. Its function is as follows. Plays a role in blocking host mRNA nuclear export to the cytoplasm and subversion of host protein synthesis. Additionally, inhibits the interferon-activated JAK/STAT signal transduction by mediating the ubiquitination and subsequent proteasomal degradation of host KPNA1. Repurposes the host antiviral stress granules into a proviral platform to counteract the EIF2AK2/PKR restriction, thereby regulating the host inflammatory response. Multifunctional protein that acts as a viral protease and as a viral antagonist of host immune response. Cleaves the nsp2/nsp3 site in the viral polyprotein. Displays deubiquitinating activity that cleaves both ubiquitinated and ISGylated products and therefore inhibits ubiquitin and ISG15-dependent host innate immunity. Also deubiquinates host NFKBIA, thereby interfering with NFKBIA degradation and impairing subsequent NF-kappa-B activation. In terms of biological role, plays a role in the inhibition of the immune response by interacting with host IFITM1. This interaction leads to the proteasomal degradation of the IFN-induced antiviral protein IFITM1. Functionally, cleaves the majority of cleavage sites present in the C-terminus of the polyprotein. Triggers host apoptosis through caspase-3, -8, and -9 activations. Subverts host innate immune responses through its protease activity. Targets the NF-kappa-B essential modulator NEMO and mediates its cleavage. Blocks host interferon beta induction and downstream signaling by cleaving mitochondrial MAVS, dislodging it from the mitochondria. Impairs host defense by cleaving host mRNA-decapping enzyme DCP1A to attenuate its antiviral activity. Its function is as follows. Plays a role in the initial induction of autophagosomes from host endoplasmic reticulum. Plays a role in the inhibition of host STAT3 signaling pathway by inducing the degradation of STAT3. In terms of biological role, responsible for replication and transcription of the viral RNA genome. Functionally, displays RNA and DNA duplex-unwinding activities with 5' to 3' polarity. Its function is as follows. Plays a role in viral transcription/replication and prevents the simultaneous activation of host cell dsRNA sensors, such as MDA5/IFIH1, OAS, PKR and NLRP3 inflammasome. Acts by degrading the 5'-polyuridines generated during replication of the poly(A) region of viral genomic and subgenomic RNAs. Catalyzes a two-step reaction in which a 2'3'-cyclic phosphate (2'3'-cP) is first generated by 2'-O transesterification, which is then hydrolyzed to a 3'-phosphate (3'-P). If not degraded, poly(U) RNA would hybridize with poly(A) RNA tails and activate host dsRNA sensors. Also plays a role in the inhibition of host type I interferon production by recruiting host OTULIN to promote removal of linear ubiquitination targeting host NEMO. In Porcine reproductive and respiratory syndrome virus (strain VR-2332) (PRRSV), this protein is Replicase polyprotein 1ab (rep).